Consider the following 451-residue polypeptide: Tubulin alpha-1 chain (451 aa).

Gln11 provides a ligand contact to GTP. At Lys40 the chain carries N6-acetyllysine. GTP contacts are provided by Glu71, Gly144, Thr145, Thr179, Asn206, and Asn228. Glu71 provides a ligand contact to Mg(2+). Glu254 is a catalytic residue. The disordered stretch occupies residues 432–451 (YEEVGADSAEGDEEDEGDEY).

The protein belongs to the tubulin family. In terms of assembly, dimer of alpha and beta chains. A typical microtubule is a hollow water-filled tube with an outer diameter of 25 nm and an inner diameter of 15 nM. Alpha-beta heterodimers associate head-to-tail to form protofilaments running lengthwise along the microtubule wall with the beta-tubulin subunit facing the microtubule plus end conferring a structural polarity. Microtubules usually have 13 protofilaments but different protofilament numbers can be found in some organisms and specialized cells. Mg(2+) is required as a cofactor. Post-translationally, undergoes a tyrosination/detyrosination cycle, the cyclic removal and re-addition of a C-terminal tyrosine residue by the enzymes tubulin tyrosine carboxypeptidase (TTCP) and tubulin tyrosine ligase (TTL), respectively. Acetylation of alpha chains at Lys-40 stabilizes microtubules and affects affinity and processivity of microtubule motors. This modification has a role in multiple cellular functions, ranging from cell motility, cell cycle progression or cell differentiation to intracellular trafficking and signaling.

The protein resides in the cytoplasm. The protein localises to the cytoskeleton. The catalysed reaction is GTP + H2O = GDP + phosphate + H(+). Tubulin is the major constituent of microtubules, a cylinder consisting of laterally associated linear protofilaments composed of alpha- and beta-tubulin heterodimers. Microtubules grow by the addition of GTP-tubulin dimers to the microtubule end, where a stabilizing cap forms. Below the cap, tubulin dimers are in GDP-bound state, owing to GTPase activity of alpha-tubulin. This chain is Tubulin alpha-1 chain, found in Gossypium hirsutum (Upland cotton).